Consider the following 253-residue polypeptide: Non-homologous end joining protein Ku (253 aa).

In terms of domain architecture, Ku spans 9–192; it reads ISFGLVNIPV…EITEEELELA (184 aa).

The protein belongs to the prokaryotic Ku family. In terms of assembly, homodimer. Interacts with LigD.

With LigD forms a non-homologous end joining (NHEJ) DNA repair enzyme, which repairs dsDNA breaks with reduced fidelity. Binds linear dsDNA with 5'- and 3'- overhangs but not closed circular dsDNA nor ssDNA. Recruits and stimulates the ligase activity of LigD. In Archaeoglobus fulgidus (strain ATCC 49558 / DSM 4304 / JCM 9628 / NBRC 100126 / VC-16), this protein is Non-homologous end joining protein Ku.